Here is a 482-residue protein sequence, read N- to C-terminus: C3a anaphylatoxin chemotactic receptor (482 aa).

Residues 1–23 (MASFSAETNSTDLLSQPWNEPPV) lie on the Extracellular side of the membrane. N-linked (GlcNAc...) asparagine glycosylation is present at N9. A helical transmembrane segment spans residues 24–46 (ILSMVILSLTFLLGLPGNGLVLW). At 47–57 (VAGLKMQRTVN) the chain is on the cytoplasmic side. The chain crosses the membrane as a helical span at residues 58–80 (TVWFLHLTLADLLCCLSLPFSLA). Topologically, residues 81–96 (HLALQGQWPYGRFLCE) are extracellular. C95 and C172 form a disulfide bridge. A helical membrane pass occupies residues 97 to 118 (LIPSIIVLNMFASVFLLTAISL). The Cytoplasmic portion of the chain corresponds to 119 to 139 (DRCLVVFKPIWCQNHRNVGTA). Residues 140 to 160 (CSICGCIWVVAFVMCIPVFVY) form a helical membrane-spanning segment. Topologically, residues 161–340 (REIFTADNHN…TPLVAITITR (180 aa)) are extracellular. Residues Y174 and Y184 each carry the sulfotyrosine modification. An N-linked (GlcNAc...) asparagine glycan is attached at N194. Y318 carries the sulfotyrosine modification. The chain crosses the membrane as a helical span at residues 341–360 (LVVGFLLPSVIMIACYSFIV). Over 361 to 377 (FRMQRGRFAKSQSKTFR) the chain is Cytoplasmic. Residues 378-400 (VAVVVVAVFLVCWTPYHIFGVLS) form a helical membrane-spanning segment. Topologically, residues 401–417 (LLIDPESPLGKTLMSWD) are extracellular. The helical transmembrane segment at 418–438 (HVSIALASANSCFNPFLYALL) threads the bilayer. Residues 439-482 (GKDFRKKARQSIQGILEAAFSEELTRSTHCNSNNVFSERNSTTV) lie on the Cytoplasmic side of the membrane. S459 bears the Phosphoserine mark. The residue at position 463 (T463) is a Phosphothreonine.

This sequence belongs to the G-protein coupled receptor 1 family. As to quaternary structure, interacts with VGF-derived peptide TLQP-21. Among the sulfation sites Tyr-174 is essential for binding of C3a anaphylatoxin.

The protein resides in the cell membrane. Functionally, receptor for the chemotactic and inflammatory peptide anaphylatoxin C3a. This receptor stimulates chemotaxis, granule enzyme release and superoxide anion production. The polypeptide is C3a anaphylatoxin chemotactic receptor (C3AR1) (Pongo abelii (Sumatran orangutan)).